The following is a 276-amino-acid chain: Diaminopimelate epimerase (276 aa).

Residues Asn13, Gln46, and Asn66 each contribute to the substrate site. The Proton donor role is filled by Cys75. Substrate is bound by residues 76–77, Asn159, Asn192, and 210–211; these read GN and ER. Catalysis depends on Cys219, which acts as the Proton acceptor. A substrate-binding site is contributed by 220–221; that stretch reads GT.

The protein belongs to the diaminopimelate epimerase family. As to quaternary structure, homodimer.

It is found in the cytoplasm. It catalyses the reaction (2S,6S)-2,6-diaminopimelate = meso-2,6-diaminopimelate. Its pathway is amino-acid biosynthesis; L-lysine biosynthesis via DAP pathway; DL-2,6-diaminopimelate from LL-2,6-diaminopimelate: step 1/1. Its function is as follows. Catalyzes the stereoinversion of LL-2,6-diaminopimelate (L,L-DAP) to meso-diaminopimelate (meso-DAP), a precursor of L-lysine and an essential component of the bacterial peptidoglycan. This Pseudomonas entomophila (strain L48) protein is Diaminopimelate epimerase.